Here is a 383-residue protein sequence, read N- to C-terminus: Ceramide synthase 3 (383 aa).

Residues 32–52 (VFVKASHLYITIPYAFLLMVV) form a helical membrane-spanning segment. Positions 66–127 (NALGIKKTQH…RIRQKQNKPC (62 aa)) are homeobox-like. Positions 130-331 (QKFQESCWRF…ILKMLNRCIF (202 aa)) constitute a TLC domain. The next 5 helical transmembrane spans lie at 139–159 (FTFYLLITMAGAVFLYDKPWA), 174–194 (LLPSQYWYYILEMSFYWSLVF), 205–225 (FLAHVIHHLAAISLMSFSWCA), 263–283 (LFFIFTVVFFISRFIIFPFWI), and 302–322 (IFLNLQLMILQGLHVYWGYFI). Topologically, residues 323 to 383 (LKMLNRCIFT…HLIANGQHGR (61 aa)) are cytoplasmic. Residue serine 340 is modified to Phosphoserine. Residues 340–383 (SDNEEEEEEEEEEEAESTKGKETEYLKNGLGTNRHLIANGQHGR) form a disordered region. Acidic residues predominate over residues 342 to 354 (NEEEEEEEEEEEA). Positions 355–364 (ESTKGKETEY) are enriched in basic and acidic residues.

In terms of tissue distribution, predominantly expressed in testis. In skin, present in the upper stratum spinosum and stratum granulosum (at protein level).

The protein resides in the endoplasmic reticulum membrane. It carries out the reaction a very long-chain fatty acyl-CoA + a sphingoid base = an N-(very-long-chain fatty acyl)-sphingoid base + CoA + H(+). The catalysed reaction is docosanoyl-CoA + sphinganine = N-docosanoylsphinganine + CoA + H(+). The enzyme catalyses tetracosanoyl-CoA + sphinganine = N-tetracosanoylsphinganine + CoA + H(+). It catalyses the reaction hexacosanoyl-CoA + sphinganine = N-hexacosanoylsphinganine + CoA + H(+). It carries out the reaction 2-hydroxydocosanoyl-CoA + sphinganine = N-(2-hydroxydocosanoyl)-sphinganine + CoA + H(+). The catalysed reaction is 2-hydroxytetracosanoyl-CoA + sphinganine = N-(2-hydroxytetracosanoyl)-sphinganine + CoA + H(+). The enzyme catalyses an ultra-long-chain fatty acyl-CoA + a sphingoid base = an N-(ultra-long-chain-acyl)-sphingoid base + CoA + H(+). It catalyses the reaction octacosanoyl-CoA + sphinganine = N-(octacosanoyl)-sphinganine + CoA + H(+). It carries out the reaction a fatty acyl-CoA + sphing-4-enine = an N-acylsphing-4-enine + CoA + H(+). The catalysed reaction is sphinganine + octadecanoyl-CoA = N-(octadecanoyl)-sphinganine + CoA + H(+). The enzyme catalyses 2-hydroxyoctadecanoyl-CoA + sphinganine = N-(2-hydroxyoctadecanoyl)-sphinganine + CoA + H(+). Its pathway is lipid metabolism; sphingolipid metabolism. Its function is as follows. Ceramide synthase that catalyzes the transfer of the acyl chain from acyl-CoA to a sphingoid base, with high selectivity toward very- and ultra-long-chain fatty acyl-CoA (chain length greater than C22). N-acylates sphinganine and sphingosine bases to form dihydroceramides and ceramides in de novo synthesis and salvage pathways, respectively. It is crucial for the synthesis of ultra-long-chain ceramides in the epidermis, to maintain epidermal lipid homeostasis and terminal differentiation. This chain is Ceramide synthase 3, found in Mus musculus (Mouse).